We begin with the raw amino-acid sequence, 1985 residues long: Treslin (1985 aa).

Disordered regions lie at residues 574–609 (AQKA…LKPT), 791–858 (EEKS…QPNK), 894–974 (IQET…SIVE), 999–1033 (RRNS…RPGS), 1072–1156 (VYKT…LWGR), 1184–1243 (VKTP…PSGY), 1849–1875 (HEDS…QSRS), and 1938–1966 (FSDG…SPFR). A compositionally biased stretch (basic residues) spans 823–837 (RSAKKRRSTALARHR). Low complexity predominate over residues 964–974 (SESNSNISIVE). 2 stretches are compositionally biased toward polar residues: residues 999 to 1026 (RRNS…QLQQ) and 1085 to 1097 (SKNI…QSGN). Low complexity predominate over residues 1105-1114 (TPYTPRTPSR). Composition is skewed to basic and acidic residues over residues 1144-1156 (KPEE…LWGR) and 1191-1200 (QRLESKDFRT). Residues 1201–1224 (PSRTPTRSNNTTPAKQSMQISNTP) are compositionally biased toward polar residues. A compositionally biased stretch (basic and acidic residues) spans 1225–1238 (RKSDLKHPQEHESR).

This sequence belongs to the treslin family. As to quaternary structure, interacts with topbp1 (via BRCT domains); interaction is cdk2-dependent. Component of the replisome complex. Post-translationally, phosphorylated during interphase. Cdk2 promotes both phosphorylation and formation of a ticrr-topbp1 complex.

The protein localises to the nucleus. In terms of biological role, regulator of DNA replication and S/M and G2/M checkpoints. Regulates the triggering of DNA replication initiation via its interaction with topbp1 by participating in cdk2-mediated loading of cdc45l onto replication origins. Required for the transition from pre-replication complex (pre-RC) to pre-initiation complex (pre-IC). Required to prevent mitotic entry after treatment with ionizing radiation. The polypeptide is Treslin (ticrr) (Xenopus laevis (African clawed frog)).